A 172-amino-acid polypeptide reads, in one-letter code: Interferon tau-3 (172 aa).

2 disulfides stabilise this stretch: Cys1–Cys99 and Cys29–Cys139. An N-linked (GlcNAc...) asparagine glycan is attached at Asn78.

Belongs to the alpha/beta interferon family. IFN-alphaII subfamily. Constitutively and exclusively expressed in the mononuclear cells of the extraembryonic trophectoderm.

The protein localises to the secreted. Its function is as follows. Paracrine hormone primarily responsible for maternal recognition of pregnancy. Interacts with endometrial receptors, probably type I interferon receptors, and blocks estrogen receptor expression, preventing the estrogen-induced increase in oxytocin receptor expression in the endometrium. This results in the suppression of the pulsatile endometrial release of the luteolytic hormone prostaglandin F2-alpha, hindering the regression of the corpus luteum (luteolysis) and therefore a return to ovarian cyclicity. This, and a possible direct effect of IFN-tau on prostaglandin synthesis, leads in turn to continued ovarian progesterone secretion, which stimulates the secretion by the endometrium of the nutrients required for the growth of the conceptus. In summary, displays particularly high antiviral and antiproliferative potency concurrently with particular weak cytotoxicity, high antiluteolytic activity and immunomodulatory properties. In contrast with other IFNs, IFN-tau is not virally inducible. The polypeptide is Interferon tau-3 (IFNT3) (Bos taurus (Bovine)).